Here is a 105-residue protein sequence, read N- to C-terminus: Pyrimidine/purine nucleoside phosphorylase (105 aa).

The protein belongs to the nucleoside phosphorylase PpnP family.

The catalysed reaction is a purine D-ribonucleoside + phosphate = a purine nucleobase + alpha-D-ribose 1-phosphate. The enzyme catalyses adenosine + phosphate = alpha-D-ribose 1-phosphate + adenine. It catalyses the reaction cytidine + phosphate = cytosine + alpha-D-ribose 1-phosphate. It carries out the reaction guanosine + phosphate = alpha-D-ribose 1-phosphate + guanine. The catalysed reaction is inosine + phosphate = alpha-D-ribose 1-phosphate + hypoxanthine. The enzyme catalyses thymidine + phosphate = 2-deoxy-alpha-D-ribose 1-phosphate + thymine. It catalyses the reaction uridine + phosphate = alpha-D-ribose 1-phosphate + uracil. It carries out the reaction xanthosine + phosphate = alpha-D-ribose 1-phosphate + xanthine. Its function is as follows. Catalyzes the phosphorolysis of diverse nucleosides, yielding D-ribose 1-phosphate and the respective free bases. Can use uridine, adenosine, guanosine, cytidine, thymidine, inosine and xanthosine as substrates. Also catalyzes the reverse reactions. The polypeptide is Pyrimidine/purine nucleoside phosphorylase (Ralstonia pickettii (strain 12J)).